The chain runs to 505 residues: Cytochrome P450 monooxygenase efuB (505 aa).

The helical transmembrane segment at 12 to 34 (GFWPTVAGTVATYLFYQIVATVY) threads the bilayer. C450 serves as a coordination point for heme.

The protein belongs to the cytochrome P450 family. Heme is required as a cofactor.

The protein localises to the membrane. The protein operates within secondary metabolite biosynthesis; terpenoid biosynthesis. Cytochrome P450 monooxygenase; part of the gene cluster that mediates the biosynthesis of enfumafungin, a glycosylated fernene-type triterpenoid with potent antifungal activity, mediated by its interaction with beta-1,3-glucan synthase and the fungal cell wall. The pathway begins with the terpene cyclase-glycosyl transferase fusion protein that most likely uses 2,3-oxidosqualene as substrate and catalyzes glycosylation immediately after cyclization. The fernene glycoside then could be processed by the desaturase efuI which catalyzes isomerization of a double bond established by efuA to form the core structure. The latter would then undergo a series of hydroxylations in unknown order at C-2, C-19, C-23 and C-25, which would be catalyzed by two of the three cytochrome P450 monooxygenases efuB, efuG or efuH. The hydroxy-group at C-25 becomes oxidized by the dehydrogenase efuE to enable a spontaneous, non-enzymatic hemiacetal formation with C-23. After hydroxylation at C-2, acetylation by the acetyltransferase efuC takes place. The final steps in enfumafungin biosynthesis require expansion of the 5-membered ring by lactonization via a Baeyer-Villiger reaction mediated by one of the BGC's cytochrome P450 monooxygenases (efuB, efuG or efuH) followed by ring cleavage. This type of reaction would establish a double bond between C-20 and C-21 which could be reduced by the reductase efuL to form the final product. In Hormonema carpetanum, this protein is Cytochrome P450 monooxygenase efuB.